Consider the following 89-residue polypeptide: Small ribosomal subunit protein uS15 (89 aa).

It belongs to the universal ribosomal protein uS15 family. Part of the 30S ribosomal subunit. Forms a bridge to the 50S subunit in the 70S ribosome, contacting the 23S rRNA.

In terms of biological role, one of the primary rRNA binding proteins, it binds directly to 16S rRNA where it helps nucleate assembly of the platform of the 30S subunit by binding and bridging several RNA helices of the 16S rRNA. Its function is as follows. Forms an intersubunit bridge (bridge B4) with the 23S rRNA of the 50S subunit in the ribosome. In Marinobacter nauticus (strain ATCC 700491 / DSM 11845 / VT8) (Marinobacter aquaeolei), this protein is Small ribosomal subunit protein uS15.